We begin with the raw amino-acid sequence, 546 residues long: MGERKGIPMALGLLAMILFFIASSSSHLVRASDDADDAIFYESFDEDFDGRWIVSDKEDYNGVWKHAKSDGHDDYGLLVSEQARKYAIVKELAESVSLKDGTVVLQFETRLQNGLECGGAYIKYLRPQESGWKPKEFDNESPYSIMFGPDKCGATNKVHFIFKHKNPKSGEYVEHHLKYPPSVPSDKLTHVYTAILKPDNELQILIDGEEKKKANFLSSEDFEPPLIPSKTIPDPDDKKPEDWDERAKIPDPSAVKPDDWDEDAPMEILDEEAEKPEGWLDDEPEEIDDPEATKPEDWDDEEDGEWEAPKIENPKCEAAPGCGEWKRPTKRNPAYKGKWSAPYIDNPSYKGIWKPREIPNPEYFELAKPDFEPIAAIGIEIWTMQDGILFDNVLIANDDKVAESYRETTWKPKFTVEKDKLKAEEEAATGSDGISGFQKKVFDLLYKIADIPFLSEHKSKIFDLIEKAEKQPNLTIGILVAVVVVFVSIFFRLIFGGKKPAKVEKKPERTEASNNQGSGENEENKEKEKQKEEASNAARRRPRRET.

Residues 1–25 form the signal peptide; the sequence is MGERKGIPMALGLLAMILFFIASSS. Over 26–475 the chain is Lumenal; that stretch reads SHLVRASDDA…EKAEKQPNLT (450 aa). Ca(2+)-binding residues include S43 and D74. A disulfide bridge links C117 with C152. Residues Y121, K123, Y143, and D150 each coordinate an alpha-D-glucoside. The interval 217–329 is disordered; it reads LSSEDFEPPL…PGCGEWKRPT (113 aa). A p domain (Extended arm) region spans residues 232-365; it reads IPDPDDKKPE…REIPNPEYFE (134 aa). The segment covering 233-249 has biased composition (basic and acidic residues); the sequence is PDPDDKKPEDWDERAKI. Repeat copies occupy residues 234 to 245, 251 to 262, 270 to 281, 289 to 300, and 304 to 314. 4 X approximate repeats stretches follow at residues 234 to 300 and 304 to 361; these read DPDD…DWDD and GEWE…IPNP. 2 stretches are compositionally biased toward acidic residues: residues 259 to 290 and 297 to 306; these read DWDE…IDDP and DWDDEEDGEW. C316 and C322 are joined by a disulfide. A run of 3 repeats spans residues 323 to 333, 337 to 347, and 351 to 361. E380 serves as a coordination point for an alpha-D-glucoside. Ca(2+) is bound at residue D391. The N-linked (GlcNAc...) asparagine glycan is linked to N473. A helical membrane pass occupies residues 476–496; it reads IGILVAVVVVFVSIFFRLIFG. Over 497–546 the chain is Cytoplasmic; the sequence is GKKPAKVEKKPERTEASNNQGSGENEENKEKEKQKEEASNAARRRPRRET. Composition is skewed to basic and acidic residues over residues 501-511 and 522-534; these read AKVEKKPERTE and EENK…KEEA. A disordered region spans residues 501–546; sequence AKVEKKPERTEASNNQGSGENEENKEKEKQKEEASNAARRRPRRET.

The protein belongs to the calreticulin family.

Its subcellular location is the endoplasmic reticulum membrane. Calcium-binding protein that interacts with newly synthesized monoglucosylated glycoproteins in the endoplasmic reticulum. It may act in assisting protein assembly and/or in the retention within the ER of unassembled protein subunits. It seems to play a major role in the quality control apparatus of the ER by the retention of incorrectly folded proteins. The polypeptide is Calnexin homolog (Glycine max (Soybean)).